Consider the following 262-residue polypeptide: Short-chain reductase protein NovJ (262 aa).

NADP(+) is bound by residues 23–26 and 73–74; these read GAGR and DV. S152 is a binding site for substrate. Y164 acts as the Proton acceptor in catalysis. 164–168 is an NADP(+) binding site; it reads YATAK.

It belongs to the short-chain dehydrogenases/reductases (SDR) family. In terms of assembly, heterotetramer; the NovJ(2)K(2) heterotetramer is composed of subunits of 2 NovJ and 2 subunits of NovK.

It participates in antibiotic biosynthesis; novobiocin biosynthesis. In terms of biological role, catalytic subunit of the NovJ(2)K(2) heterotetramer that catalyzes the NADPH-dependent reduction of the tyrosyl moiety of L-beta-OH-Tyr-S-NovH intermediate to yield the tethered beta-ketotyrosyl-S-NovH in the novobiocin biosynthesis pathway. Novobiocin is an aminocoumarin family antibiotic that targets bacterial DNA gyrases. The sequence is that of Short-chain reductase protein NovJ (novJ) from Streptomyces niveus (Streptomyces spheroides).